The primary structure comprises 110 residues: Small ribosomal subunit protein uS17 (110 aa).

The protein belongs to the universal ribosomal protein uS17 family. In terms of assembly, part of the 30S ribosomal subunit.

One of the primary rRNA binding proteins, it binds specifically to the 5'-end of 16S ribosomal RNA. This is Small ribosomal subunit protein uS17 from Petrotoga mobilis (strain DSM 10674 / SJ95).